The chain runs to 2313 residues: MNKELIQINLPANIQNFKEIDLSLYYLRFWYKLNIRKTIVRIWTNRNNLIKLFDFQILSSFILRNLHSSRSQKKIFPLKYLFIITIPLFLYRINSRTLLQRENLVLTKLVNTTVRSSGVIQGISRESYTDLCYLPARVRKLPVCNTTNCTDIEWWKDWIVKDILPSWKISQRLINEVEMLLREKNISNLRHFFELYTFIFANHSSLAWRYDFNSFFVRKQNDRMNCDLGQQSDFLEKNHFFSSVMIAFCEKILFEAEDLSNKQEYKSNLDLIHSRFWIYTNQYHYMNLSQPLIVHYIRHLKDFRVREIFLNLFEDFVEFYSWAYYSANFSTWQRYEEKLGIIKDLVRQALISSDTVSSFDNTTAIQSLFAEILSQFSVYLLSRVQTSGQLTGLRIEKLRNMDLKMSKRDLFQNIGIITKNEDPKVFVSESSISNFTNDSYWSLNYYKYYLFNKWNWKQLLVPVESKMNIRYQTMGYPFSDTNYSIEYEKAYEAIGETAKSFIETLSPRDKRTLVNRNSKSISLSIVKPFHSNLWNKDMLPLHEHSLSVKSISEKIKLLEKQQYIDLRDDNFSDIFQIVDIWGRSRHYHSSRYCEVDNFLLRKRIGRAKSHVHELSSLISSIVNLPSSIFERAIKLCSSHQYLQFKILLLPRLNKIYLLLTKPNLGFVEIIKNDHCNNEEPDSVEDETILVKNTSINNIESFTKPNEMTDVEFDSTTNLLTKENIDYVQDTIKNDLFLMWNNMKDIMNISPISFLIKIDKHNDLTSLCSQYIVYIYQYVFIKSGGYLSKLRSQIKPWVNNDYFCCLMKQTIDRDLPNWENSLNRLNELIIQIDQIYVNVHNNLSIIEDWEDWDYFSNYVYLDPIYEKLNFFFNRLIGNILFEDKKAIKYYSKSLLLTDEVISNTLETLETFLPHLKYIKNFLFNHSSILEQFWHNRSDISRDLGSQVSNKLVLLLAHSKIPSNSIFSNIAKNGNILIEDLAYREIDKQNNWFNCFNARNRIPLKHSFDEKNAIFFLEHFANPQLNYNERLYFPKRKIFIKGYNRAYADIIINDLPRLINGFRSFIRRKGFCLEGTNFFQIKSHLFNKIPNKEYPHSILTQTIQILHRFYLIKEFGSSIQLKSLSTEQVNLFDLQERFLNSSSIRKQLVNIGVSDYWQPLLDSDPTNDFHLMNISTKDQLNQNGGSGSIIDEKSYHNDYLYSKFFGNLEEYDMLFRLKIPELSIHFIPDDSKIESLEKHIEFNQDIKNIYVDKNIFRSNLLMRFNERLRVINILELLRVSTIAKKWLFFHEYIPWFFTIEWWKYINSAVPNTFSETLLNISDQWISNLYYITNNIKNSITYLWVNLEFKLKAYSFDNKIYRFDSSIGVIYKEGCSSLRWSPLRLMSDSNVLYLTLIIPLLFSYIVFQHYLSIFTGFHSFSLWKRFEVFNYFLDPFNKIYIEKVLSFFPPARQKSIKPSLVDYLKRFFIYLTYGSSKRKVDVLLSYGKSLDIFREENNLVVHYLITNRILSQDGFHFHLNSNNMLNSNIKEFSSKLGLNYLQYLANIYKTNLSNFPISQLDLVERCLFFTFWQNIISPGIPGQFHILQNTPIPLQLGSSFPSKGILLIGSMETGRSYLIKSLAANYCLPLIQIPINKLLDKKVHFESKSVVLFPGESVRRLTLTFELVKRMSPCIVWIQDIHELNLDRVMNELEVDPKYLFCSLLKCLSNNSSNYYVRNNIIIAPTHIPSKVDPSFISPNRLDQLINIRRLNIHQREREFLALLRVKGFYYKGDLSHLGELGSITRGYSKRDLTVLANGVLLLSITQKESFVCQNSMELALHRQVRALDNKSKNGLRYEMLFYRIGKAIIQNSLINMPYIDSLSINPKLLRKRFSFLSNWYLETSLAESTVKELTLLPYIMGCLAGIAARDSWFILERKQESLVTLDRISENDIQLAFGILESLLADFSGLEICGKNDHNSLLQQTNKQYFNRIQKVLFSENDETILKENTKSINPYLSGANRYFFLARSSCLSRISFLRSSIYESMELSSESNTSYKMKESNENLVQHTERDLDSTKKDQDQILKGKDEFAGYRRILRDYRERPIYTTLENQLDHLDQLDNASLLDPFLKSNMDKSFMQYEMQYYPSDKLVLFLGRRFIWNMAGSSFIRDNAAFQRNKLFAEGDEVKRLYIAYGAIKERRKRLSFNKYIKKIDSQESSQNLITKQEKRHFENVRTNQMIKSYFGIPRLLPTVYLYQSIFIENTQDRYNHLNLLNYRHSLSSSREGLIYMILLESYHYLLNLFLSNRIILEKMAIILLKNTLISSKEVEQILSKLK.

1606 to 1613 (GSMETGRS) lines the ATP pocket.

The protein belongs to the Ycf2 family.

The protein localises to the plastid. It is found in the chloroplast stroma. Functionally, probable ATPase of unknown function. Its presence in a non-photosynthetic plant (Epifagus virginiana) and experiments in tobacco indicate that it has an essential function which is probably not related to photosynthesis. This chain is Protein Ycf2, found in Psilotum nudum (Whisk fern).